A 165-amino-acid polypeptide reads, in one-letter code: Endoribonuclease YbeY (165 aa).

Residues histidine 130, histidine 134, and histidine 140 each contribute to the Zn(2+) site.

The protein belongs to the endoribonuclease YbeY family. The cofactor is Zn(2+).

It localises to the cytoplasm. In terms of biological role, single strand-specific metallo-endoribonuclease involved in late-stage 70S ribosome quality control and in maturation of the 3' terminus of the 16S rRNA. The sequence is that of Endoribonuclease YbeY from Streptococcus gordonii (strain Challis / ATCC 35105 / BCRC 15272 / CH1 / DL1 / V288).